The sequence spans 340 residues: Protein RecA (340 aa).

An ATP-binding site is contributed by 65–72 (GPESGGKT).

The protein belongs to the RecA family.

Its subcellular location is the cytoplasm. Can catalyze the hydrolysis of ATP in the presence of single-stranded DNA, the ATP-dependent uptake of single-stranded DNA by duplex DNA, and the ATP-dependent hybridization of homologous single-stranded DNAs. It interacts with LexA causing its activation and leading to its autocatalytic cleavage. The sequence is that of Protein RecA from Thermus thermophilus (strain ATCC 27634 / DSM 579 / HB8).